The following is a 95-amino-acid chain: Aspartyl/glutamyl-tRNA(Asn/Gln) amidotransferase subunit C (95 aa).

Belongs to the GatC family. As to quaternary structure, heterotrimer of A, B and C subunits.

The enzyme catalyses L-glutamyl-tRNA(Gln) + L-glutamine + ATP + H2O = L-glutaminyl-tRNA(Gln) + L-glutamate + ADP + phosphate + H(+). The catalysed reaction is L-aspartyl-tRNA(Asn) + L-glutamine + ATP + H2O = L-asparaginyl-tRNA(Asn) + L-glutamate + ADP + phosphate + 2 H(+). Functionally, allows the formation of correctly charged Asn-tRNA(Asn) or Gln-tRNA(Gln) through the transamidation of misacylated Asp-tRNA(Asn) or Glu-tRNA(Gln) in organisms which lack either or both of asparaginyl-tRNA or glutaminyl-tRNA synthetases. The reaction takes place in the presence of glutamine and ATP through an activated phospho-Asp-tRNA(Asn) or phospho-Glu-tRNA(Gln). This Rhodopseudomonas palustris (strain BisB5) protein is Aspartyl/glutamyl-tRNA(Asn/Gln) amidotransferase subunit C.